A 380-amino-acid chain; its full sequence is Chaperone protein DnaJ (380 aa).

Positions 5 to 69 (DLYKVLGVEK…QKRAQYDQFG (65 aa)) constitute a J domain. The segment at 140–222 (GKKTTITYNR…CGGSGHTEQS (83 aa)) adopts a CR-type zinc-finger fold. 8 residues coordinate Zn(2+): Cys-153, Cys-156, Cys-170, Cys-173, Cys-196, Cys-199, Cys-210, and Cys-213. CXXCXGXG motif repeat units lie at residues 153–160 (CETCGGSG), 170–177 (CSKCHGAG), 196–203 (CDVCHGTG), and 210–217 (CATCGGSG).

Belongs to the DnaJ family. As to quaternary structure, homodimer. Requires Zn(2+) as cofactor.

The protein localises to the cytoplasm. Functionally, participates actively in the response to hyperosmotic and heat shock by preventing the aggregation of stress-denatured proteins and by disaggregating proteins, also in an autonomous, DnaK-independent fashion. Unfolded proteins bind initially to DnaJ; upon interaction with the DnaJ-bound protein, DnaK hydrolyzes its bound ATP, resulting in the formation of a stable complex. GrpE releases ADP from DnaK; ATP binding to DnaK triggers the release of the substrate protein, thus completing the reaction cycle. Several rounds of ATP-dependent interactions between DnaJ, DnaK and GrpE are required for fully efficient folding. Also involved, together with DnaK and GrpE, in the DNA replication of plasmids through activation of initiation proteins. The chain is Chaperone protein DnaJ from Lactiplantibacillus plantarum (strain ATCC BAA-793 / NCIMB 8826 / WCFS1) (Lactobacillus plantarum).